The primary structure comprises 281 residues: Undecaprenyl-diphosphatase (281 aa).

6 consecutive transmembrane segments (helical) span residues 90–110 (WLVT…QDSI), 113–133 (VLRG…VLGA), 147–167 (LSWK…IPGV), 191–211 (SFLL…YDEL), 217–237 (IAWV…YAVI), and 257–277 (IAAA…AFQG).

The protein belongs to the UppP family.

The protein resides in the cell membrane. It carries out the reaction di-trans,octa-cis-undecaprenyl diphosphate + H2O = di-trans,octa-cis-undecaprenyl phosphate + phosphate + H(+). Its function is as follows. Catalyzes the dephosphorylation of undecaprenyl diphosphate (UPP). Confers resistance to bacitracin. The protein is Undecaprenyl-diphosphatase of Kineococcus radiotolerans (strain ATCC BAA-149 / DSM 14245 / SRS30216).